Here is a 117-residue protein sequence, read N- to C-terminus: Large ribosomal subunit protein uL18 (117 aa).

This sequence belongs to the universal ribosomal protein uL18 family. In terms of assembly, part of the 50S ribosomal subunit; part of the 5S rRNA/L5/L18/L25 subcomplex. Contacts the 5S and 23S rRNAs.

Functionally, this is one of the proteins that bind and probably mediate the attachment of the 5S RNA into the large ribosomal subunit, where it forms part of the central protuberance. The polypeptide is Large ribosomal subunit protein uL18 (Pectobacterium atrosepticum (strain SCRI 1043 / ATCC BAA-672) (Erwinia carotovora subsp. atroseptica)).